The following is a 321-amino-acid chain: MQCRLPRGLAGALLTLLCMGLLCLRYHLNLSPQRVQETPELRQPNPGPPELQLHDVFIAVKTTRAFHRLRLELLLDTWVSRTREQTFVFTDSPDKGLQERLGSHLVVTNCSAEHSHPALSCKMAAEFDTFLASGLRWFCHVDDDNYVNPRALLQLLRAFPLAHDVYVGRPSLNRPIHASEPQPHNRTRLVQFWFATGGAGFCINRRLALKMAPWASGSRFMDTSALIRLPDDCTMGYIIECKLGGRLQPSPLFHSHLETLQLLRTAQLPEQVTLSYGVFEGKLNVIKLQGPFSPEEDPSRFRSLHCLLYPDTPWCPQLGAR.

The Cytoplasmic portion of the chain corresponds to 1-7; it reads MQCRLPR. The helical; Signal-anchor for type II membrane protein transmembrane segment at 8–27 threads the bilayer; that stretch reads GLAGALLTLLCMGLLCLRYH. Residues 28 to 321 lie on the Lumenal side of the membrane; the sequence is LNLSPQRVQE…TPWCPQLGAR (294 aa). Residue Arg70 participates in substrate binding. Asn109 is a glycosylation site (N-linked (GlcNAc...) asparagine). Intrachain disulfides connect Cys110-Cys121 and Cys139-Cys202. Position 143 (Asp143) interacts with substrate. Position 144 (Asp144) interacts with Mn(2+). Residue Asn185 is glycosylated (N-linked (GlcNAc...) asparagine). The active site involves Asp232. Mn(2+) is bound at residue His256. The cysteines at positions 306 and 315 are disulfide-linked.

The protein belongs to the glycosyltransferase 31 family. It depends on Mn(2+) as a cofactor.

It localises to the golgi apparatus membrane. The enzyme catalyses 3-O-(alpha-L-fucosyl)-L-threonyl-[EGF-like domain protein] + UDP-N-acetyl-alpha-D-glucosamine = 3-O-(N-acetyl-beta-D-glucosaminyl-(1-&gt;3)-alpha-L-fucosyl)-L-threonyl-[EGF-like domain protein] + UDP + H(+). It carries out the reaction 3-O-(alpha-L-fucosyl)-L-seryl-[EGF-like domain protein] + UDP-N-acetyl-alpha-D-glucosamine = 3-O-(N-acetyl-beta-D-glucosaminyl-(1-&gt;3)-alpha-L-fucosyl)-L-seryl-[EGF-like domain protein] + UDP + H(+). In terms of biological role, glycosyltransferase that initiates the elongation of O-linked fucose residues attached to EGF-like repeats in the extracellular domain of Notch molecules. Modulates NOTCH1 activity by modifying O-fucose residues at specific EGF-like domains resulting in inhibition of NOTCH1 activation by JAG1 and enhancement of NOTCH1 activation by DLL1 via an increase in its binding to DLL1. The chain is Beta-1,3-N-acetylglucosaminyltransferase manic fringe (MFNG) from Pan troglodytes (Chimpanzee).